Here is a 466-residue protein sequence, read N- to C-terminus: Chromosomal replication initiator protein DnaA (466 aa).

The interval 1-86 is domain I, interacts with DnaA modulators; the sequence is MSLSLWQQCL…EVGTKPVTQT (86 aa). The tract at residues 86–129 is domain II; it reads TLKTPVHNVVAPTQTTTAQPQRVAPAARSGWDNVPAPAEPTYRS. A domain III, AAA+ region region spans residues 130–346; the sequence is NVNVKHTFDN…GALNRVIANA (217 aa). Residues Gly-174, Gly-176, Lys-177, and Thr-178 each contribute to the ATP site. The tract at residues 347–466 is domain IV, binds dsDNA; the sequence is NFTGRAITID…FSNLIRTLSS (120 aa).

It belongs to the DnaA family. In terms of assembly, oligomerizes as a right-handed, spiral filament on DNA at oriC.

It is found in the cytoplasm. Plays an essential role in the initiation and regulation of chromosomal replication. ATP-DnaA binds to the origin of replication (oriC) to initiate formation of the DNA replication initiation complex once per cell cycle. Binds the DnaA box (a 9 base pair repeat at the origin) and separates the double-stranded (ds)DNA. Forms a right-handed helical filament on oriC DNA; dsDNA binds to the exterior of the filament while single-stranded (ss)DNA is stabiized in the filament's interior. The ATP-DnaA-oriC complex binds and stabilizes one strand of the AT-rich DNA unwinding element (DUE), permitting loading of DNA polymerase. After initiation quickly degrades to an ADP-DnaA complex that is not apt for DNA replication. Binds acidic phospholipids. The chain is Chromosomal replication initiator protein DnaA from Salmonella choleraesuis (strain SC-B67).